The primary structure comprises 154 residues: Transcriptional repressor NrdR (154 aa).

A zinc finger spans residues 3 to 34 (CPYCQSEDTQVKDSRPAEDGAAIRRRRACPVC). The 91-residue stretch at 49–139 (LVVVKRTGRK…VYRNFREAKD (91 aa)) folds into the ATP-cone domain.

The protein belongs to the NrdR family. Zn(2+) serves as cofactor.

Negatively regulates transcription of bacterial ribonucleotide reductase nrd genes and operons by binding to NrdR-boxes. The protein is Transcriptional repressor NrdR of Chelativorans sp. (strain BNC1).